The sequence spans 81 residues: Control protein C.BamHI (81 aa).

Residues 13–68 (VRQIRLSKSNMSQEKLAFECDLHRTYISDIERGTRNVSLDNIEKISKALGVQPKDL) form the HTH cro/C1-type domain. A DNA-binding region (H-T-H motif) is located at residues 25 to 44 (QEKLAFECDLHRTYISDIER).

May help modulate methylase (M) and restriction enzyme (R) expression as cells undergo physiological changes such as sporulation or transformation. The sequence is that of Control protein C.BamHI from Bacillus amyloliquefaciens (Bacillus velezensis).